Consider the following 251-residue polypeptide: MRKPIIAGNWKMNKTVGEAKAFVEEVKGAIPSSDKVDSVVCSPALFLEGLVQKAEGTELRIGAQNMHFEESGAFTGEISPVALSDMKVDYVILGHSERRDMFAETDELVNKKTHAAFAHGLTPIVCVGETLEEREANQTYDVVKTQVEKGLEGLTDEQVKVTVIAYEPVWAIGTGKSSSAEDANDVCSYIRKVVTEKFSQEAADAVRIQYGGSVKPANIAEYMAQSDIDGALVGGASLDPQSFLQLLEAVK.

Residue 9–11 (NWK) participates in substrate binding. The active-site Electrophile is His95. The Proton acceptor role is filled by Glu167. Substrate is bound by residues Gly173, Ser213, and 234–235 (GG). Ser213 is modified (phosphoserine).

This sequence belongs to the triosephosphate isomerase family. In terms of assembly, homodimer.

It localises to the cytoplasm. The enzyme catalyses D-glyceraldehyde 3-phosphate = dihydroxyacetone phosphate. Its pathway is carbohydrate biosynthesis; gluconeogenesis. It functions in the pathway carbohydrate degradation; glycolysis; D-glyceraldehyde 3-phosphate from glycerone phosphate: step 1/1. Functionally, involved in the gluconeogenesis. Catalyzes stereospecifically the conversion of dihydroxyacetone phosphate (DHAP) to D-glyceraldehyde-3-phosphate (G3P). The protein is Triosephosphate isomerase of Halalkalibacterium halodurans (strain ATCC BAA-125 / DSM 18197 / FERM 7344 / JCM 9153 / C-125) (Bacillus halodurans).